Consider the following 202-residue polypeptide: Amelogenin (202 aa).

Ser16 carries the post-translational modification Phosphoserine. The tract at residues 77-202 (QPAPPQQPVM…TDKTKREEVD (126 aa)) is disordered. Residues 78-87 (PAPPQQPVMP) are compositionally biased toward pro residues. Over residues 101-112 (QPNLPQPGQQPY) the composition is skewed to low complexity. Positions 113 to 125 (QPQPAQQPQPHQP) are enriched in pro residues. Low complexity predominate over residues 126-158 (IQPIQPIQPIQPMQPMQPMQPMQPMQPMQPQTP). The span at 164–176 (PLPPQPPLPPMFP) shows a compositional bias: pro residues.

It belongs to the amelogenin family.

It localises to the secreted. The protein resides in the extracellular space. Its subcellular location is the extracellular matrix. Plays a role in the biomineralization of teeth. Seems to regulate the formation of crystallites during the secretory stage of tooth enamel development. Thought to play a major role in the structural organization and mineralization of developing enamel. The protein is Amelogenin (AMEL) of Monodelphis domestica (Gray short-tailed opossum).